The chain runs to 39 residues: Protein disulfide-isomerase A3 (39 aa).

This sequence belongs to the protein disulfide isomerase family. As to quaternary structure, part of the major histocompatibility complex class I (MHC I) peptide loading complex composed of TAP1, TAP2, B2M, MHC heavy chain, TAPBP, PDIA3, and CALR. Interacts with ERP27 and CANX. Interacts with SERPINA2 and with SERPINA1. Interacts with ATP2A2. In terms of processing, within the major histocompatibility complex class I (MHC I) peptide loading complex forms reversible disulfide-linked heterodimers with TAPBP as part of its protein folding chaperone activity. This is essential to assist the dynamic assembly of the MHC I complex with high affinity antigens in the endoplasmic reticulum. Post-translationally, phosphorylated. In terms of tissue distribution, predominantly expressed in liver. Low in brain, testis and colon. Not detectable in pancreas and skeletal muscle.

Its subcellular location is the endoplasmic reticulum. The protein localises to the endoplasmic reticulum lumen. It is found in the melanosome. The catalysed reaction is Catalyzes the rearrangement of -S-S- bonds in proteins.. Its function is as follows. Protein disulfide isomerase that catalyzes the formation, isomerization, and reduction or oxidation of disulfide bonds in client proteins and functions as a protein folding chaperone. Core component of the major histocompatibility complex class I (MHC I) peptide loading complex where it functions as an essential folding chaperone for TAPBP. Through TAPBP, assists the dynamic assembly of the MHC I complex with high affinity antigens in the endoplasmic reticulum. Therefore, plays a crucial role in the presentation of antigens to cytotoxic T cells in adaptive immunity. This chain is Protein disulfide-isomerase A3 (PDIA3), found in Papio hamadryas (Hamadryas baboon).